The following is a 172-amino-acid chain: Crossover junction endodeoxyribonuclease RuvC (172 aa).

Catalysis depends on residues aspartate 12, glutamate 71, and aspartate 143. Mg(2+) is bound by residues aspartate 12, glutamate 71, and aspartate 143.

The protein belongs to the RuvC family. As to quaternary structure, homodimer which binds Holliday junction (HJ) DNA. The HJ becomes 2-fold symmetrical on binding to RuvC with unstacked arms; it has a different conformation from HJ DNA in complex with RuvA. In the full resolvosome a probable DNA-RuvA(4)-RuvB(12)-RuvC(2) complex forms which resolves the HJ. Mg(2+) serves as cofactor.

It is found in the cytoplasm. It catalyses the reaction Endonucleolytic cleavage at a junction such as a reciprocal single-stranded crossover between two homologous DNA duplexes (Holliday junction).. Functionally, the RuvA-RuvB-RuvC complex processes Holliday junction (HJ) DNA during genetic recombination and DNA repair. Endonuclease that resolves HJ intermediates. Cleaves cruciform DNA by making single-stranded nicks across the HJ at symmetrical positions within the homologous arms, yielding a 5'-phosphate and a 3'-hydroxyl group; requires a central core of homology in the junction. The consensus cleavage sequence is 5'-(A/T)TT(C/G)-3'. Cleavage occurs on the 3'-side of the TT dinucleotide at the point of strand exchange. HJ branch migration catalyzed by RuvA-RuvB allows RuvC to scan DNA until it finds its consensus sequence, where it cleaves and resolves the cruciform DNA. This is Crossover junction endodeoxyribonuclease RuvC from Coxiella burnetii (strain CbuK_Q154) (Coxiella burnetii (strain Q154)).